The chain runs to 338 residues: Fructose-1,6-bisphosphatase class 1 (338 aa).

Glu-92, Asp-114, Leu-116, and Asp-117 together coordinate Mg(2+). Substrate-binding positions include 117-120 (DGSS), Asn-210, Tyr-243, and Lys-276. Residue Glu-282 coordinates Mg(2+).

The protein belongs to the FBPase class 1 family. In terms of assembly, homotetramer. Requires Mg(2+) as cofactor.

It localises to the cytoplasm. It carries out the reaction beta-D-fructose 1,6-bisphosphate + H2O = beta-D-fructose 6-phosphate + phosphate. The protein operates within carbohydrate biosynthesis; gluconeogenesis. In Maridesulfovibrio salexigens (strain ATCC 14822 / DSM 2638 / NCIMB 8403 / VKM B-1763) (Desulfovibrio salexigens), this protein is Fructose-1,6-bisphosphatase class 1.